We begin with the raw amino-acid sequence, 135 residues long: Hemoglobin subunit alpha (135 aa).

The Globin domain maps to 1 to 135 (AAVVALWGKI…VALALAERYK (135 aa)). His52 provides a ligand contact to O2. His81 contacts heme b.

Belongs to the globin family. As to quaternary structure, hb1 is a heterotetramer of two alpha chains and two beta-1 chains. Hb2 is a heterotetramer of two alpha chains and two beta-2 chains. Post-translationally, the N-terminus is blocked. Red blood cells.

Its function is as follows. Involved in oxygen transport from gills to the various peripheral tissues. The sequence is that of Hemoglobin subunit alpha from Dissostichus eleginoides (Patagonian toothfish).